The chain runs to 162 residues: NADH-quinone oxidoreductase subunit I (162 aa).

4Fe-4S ferredoxin-type domains are found at residues 53-83 (QRRY…IESE) and 93-122 (SRYD…ETHI). [4Fe-4S] cluster is bound by residues Cys-63, Cys-66, Cys-69, Cys-73, Cys-102, Cys-105, Cys-108, and Cys-112.

Belongs to the complex I 23 kDa subunit family. In terms of assembly, NDH-1 is composed of 14 different subunits. Subunits NuoA, H, J, K, L, M, N constitute the membrane sector of the complex. The cofactor is [4Fe-4S] cluster.

The protein resides in the cell inner membrane. The catalysed reaction is a quinone + NADH + 5 H(+)(in) = a quinol + NAD(+) + 4 H(+)(out). In terms of biological role, NDH-1 shuttles electrons from NADH, via FMN and iron-sulfur (Fe-S) centers, to quinones in the respiratory chain. The immediate electron acceptor for the enzyme in this species is believed to be ubiquinone. Couples the redox reaction to proton translocation (for every two electrons transferred, four hydrogen ions are translocated across the cytoplasmic membrane), and thus conserves the redox energy in a proton gradient. The sequence is that of NADH-quinone oxidoreductase subunit I from Chromobacterium violaceum (strain ATCC 12472 / DSM 30191 / JCM 1249 / CCUG 213 / NBRC 12614 / NCIMB 9131 / NCTC 9757 / MK).